The chain runs to 146 residues: Hemoglobin subunit beta (146 aa).

Val-1 is modified (N-acetylvaline). The Globin domain occupies His-2–His-146. Thr-12 carries the phosphothreonine modification. Position 44 is a phosphoserine (Ser-44). Lys-59 is modified (N6-acetyllysine). Residue His-63 participates in heme b binding. Position 82 is an N6-acetyllysine (Lys-82). His-92 contacts heme b. An S-nitrosocysteine modification is found at Cys-93. Lys-144 is modified (N6-acetyllysine).

Belongs to the globin family. As to quaternary structure, heterotetramer of two alpha chains and two beta chains. Red blood cells.

Functionally, involved in oxygen transport from the lung to the various peripheral tissues. The polypeptide is Hemoglobin subunit beta (HBB) (Tupaia glis (Common tree shrew)).